Consider the following 349-residue polypeptide: Phosphoribosylformylglycinamidine cyclo-ligase (349 aa).

Belongs to the AIR synthase family.

The protein localises to the cytoplasm. The enzyme catalyses 2-formamido-N(1)-(5-O-phospho-beta-D-ribosyl)acetamidine + ATP = 5-amino-1-(5-phospho-beta-D-ribosyl)imidazole + ADP + phosphate + H(+). It participates in purine metabolism; IMP biosynthesis via de novo pathway; 5-amino-1-(5-phospho-D-ribosyl)imidazole from N(2)-formyl-N(1)-(5-phospho-D-ribosyl)glycinamide: step 2/2. This chain is Phosphoribosylformylglycinamidine cyclo-ligase, found in Bordetella petrii (strain ATCC BAA-461 / DSM 12804 / CCUG 43448).